Consider the following 292-residue polypeptide: Ribosomal RNA small subunit methyltransferase A (292 aa).

S-adenosyl-L-methionine-binding residues include N28, L30, G55, E76, D101, and N126.

The protein belongs to the class I-like SAM-binding methyltransferase superfamily. rRNA adenine N(6)-methyltransferase family. RsmA subfamily.

Its subcellular location is the cytoplasm. It carries out the reaction adenosine(1518)/adenosine(1519) in 16S rRNA + 4 S-adenosyl-L-methionine = N(6)-dimethyladenosine(1518)/N(6)-dimethyladenosine(1519) in 16S rRNA + 4 S-adenosyl-L-homocysteine + 4 H(+). Specifically dimethylates two adjacent adenosines (A1518 and A1519) in the loop of a conserved hairpin near the 3'-end of 16S rRNA in the 30S particle. May play a critical role in biogenesis of 30S subunits. This Bacillus thuringiensis (strain Al Hakam) protein is Ribosomal RNA small subunit methyltransferase A.